Here is a 2883-residue protein sequence, read N- to C-terminus: Desmoplakin (2883 aa).

The tract at residues 1–21 (MSCNGGSHPRINTLGRMTRAE) is disordered. Residues 1–596 (MSCNGGSHPR…DYMKTIEDLE (596 aa)) are interaction with PKP1, JUP, PKP2. Residues 1–1068 (MSCNGGSHPR…ANSENCNKNK (1068 aa)) are globular 1. A Phosphoserine modification is found at S22. The residue at position 59 (T59) is a Phosphothreonine. S65 bears the Phosphoserine mark. At Y68 the chain carries Phosphotyrosine. At T73 the chain carries Phosphothreonine. Residues S177, S178, and S188 each carry the phosphoserine modification. 2 Spectrin repeats span residues 190–283 (SGWD…HLRQ) and 284–387 (LQNI…LKEN). A Spectrin 3a repeat occupies 388–458 (AAYFQFFEEA…NLVNKSKKIV (71 aa)). The 58-residue stretch at 470 to 527 (NKPIILRALCDYKQDQKIVHKGDECILKDNNERSKWYVTGPGGVDMLVPSVGLIIPPP) folds into the SH3 domain. One copy of the Spectrin 3b repeat lies at 528 to 557 (NPLAVDLSCKIEQYYEAILALWNQLYINMK). 3 Spectrin repeats span residues 558-639 (SLVS…IQLP), 666-781 (VIET…SLCS), and 782-895 (VRAL…DLEK). Residues 1034–1956 (KSLEDLKLKN…LQKEIEKLRQ (923 aa)) adopt a coiled-coil conformation. The interval 1069 to 1957 (FLDQNLQKYQ…QKEIEKLRQR (889 aa)) is central fibrous rod domain. Phosphoserine is present on residues S1670, S1720, and S2036. Positions 1958-2882 (PYGSHRETQT…YSFSSSSIGG (925 aa)) are globular 2. A 4.5 X 38 AA tandem repeats (Domain A) region spans residues 1972–2220 (TVDSSKLVFD…LLLSVQKRSM (249 aa)). Plectin repeat units lie at residues 2021–2057 (QPFL…PEST), 2058–2095 (VMLL…FDDR), 2096–2133 (QQIY…RETG), 2134–2171 (MRLL…RDLY), 2175–2209 (NDPR…PHTG), 2210–2245 (LLLL…PSTV), 2263–2300 (KDFL…PGTA), 2301–2338 (LELL…IEFK), 2339–2376 (EKLL…KGHG), 2377–2414 (IRLL…EELS), 2418–2452 (SDPS…EETG), 2468–2505 (SQKN…YDTF), 2519–2556 (TITG…RKFF), 2622–2659 (SDPL…SITG), 2660–2697 (QRLL…QDMA), 2736–2773 (QRFL…GRAA), and 2774–2811 (QRLQ…DITG). Phosphoserine occurs at positions 2219, 2221, and 2237. The segment at 2256–2458 (DEVGERIKDF…EETGLCLLPL (203 aa)) is 4.5 X 38 AA tandem repeats (Domain B). The Omega-hydroxyceramide glutamate ester moiety is linked to residue Q2492. Residues 2621-2833 (LSDPLEESSP…GLPSPYNMSA (213 aa)) form a 4.5 X 38 AA tandem repeats (Domain C) region. 2 positions are modified to phosphoserine: S2822 and S2827. The tract at residues 2822–2883 (SKGLPSPYNM…SFSSSSIGGY (62 aa)) is disordered. The residue at position 2829 (Y2829) is a Phosphotyrosine. S2832 and S2836 each carry phosphoserine. Positions 2835–2858 (GSRSGSRSGSRSGSRSGSRSGSRR) are 6 X 4 AA tandem repeats of G-S-R-[SR]. Residues 2835–2858 (GSRSGSRSGSRSGSRSGSRSGSRR) show a composition bias toward low complexity. 2 positions are modified to omega-N-methylarginine: R2837 and R2858. Residue S2860 is modified to Phosphoserine. Phosphothreonine is present on T2864. Residues 2867–2883 (SSYSYSYSFSSSSIGGY) are compositionally biased toward low complexity. The residue at position 2879 (S2879) is a Phosphoserine.

It belongs to the plakin or cytolinker family. In terms of assembly, homodimer. Interacts with COL17A1 (via cytoplasmic region). Interacts with DSC2. Interacts with PKP1. Interacts with PKP2. Interacts weakly with TMEM65. Post-translationally, phosphorylation at Ser-2860 increases association with intermediate filament cytokeratin, potentially facilitating interaction between desmosome junctions and intermediate filament architecture. Expressed in undifferentiated keratinocytes of the epidermis at birth, expression increases as differentiation proceeds (at protein level). Abundantly expressed in the suprabasal layers and weakly in the basal layers of the outer hair root sheath (at protein level). Expressed at intercalated disks in cardiomyocytes (at protein level).

Its subcellular location is the cell junction. The protein localises to the desmosome. The protein resides in the cell membrane. It is found in the cytoplasm. Major high molecular weight protein of desmosomes. Regulates profibrotic gene expression in cardiomyocytes via activation of the MAPK14/p38 MAPK signaling cascade and increase in TGFB1 protein abundance. The polypeptide is Desmoplakin (Mus musculus (Mouse)).